The following is a 321-amino-acid chain: tRNA U34 carboxymethyltransferase (321 aa).

Carboxy-S-adenosyl-L-methionine is bound by residues Lys90, Trp104, Lys109, Gly129, 151–153 (DPT), 180–181 (IE), Met195, Tyr199, and Arg314.

It belongs to the class I-like SAM-binding methyltransferase superfamily. CmoB family. Homotetramer.

The enzyme catalyses carboxy-S-adenosyl-L-methionine + 5-hydroxyuridine(34) in tRNA = 5-carboxymethoxyuridine(34) in tRNA + S-adenosyl-L-homocysteine + H(+). Its function is as follows. Catalyzes carboxymethyl transfer from carboxy-S-adenosyl-L-methionine (Cx-SAM) to 5-hydroxyuridine (ho5U) to form 5-carboxymethoxyuridine (cmo5U) at position 34 in tRNAs. The sequence is that of tRNA U34 carboxymethyltransferase from Haemophilus influenzae (strain PittEE).